The sequence spans 182 residues: Pyruvoyl-dependent arginine decarboxylase (182 aa).

The residue at position 44 (Ser44) is a Pyruvic acid (Ser).

The protein belongs to the PdaD family. Pyruvate is required as a cofactor.

The catalysed reaction is L-arginine + H(+) = agmatine + CO2. In Thermoplasma volcanium (strain ATCC 51530 / DSM 4299 / JCM 9571 / NBRC 15438 / GSS1), this protein is Pyruvoyl-dependent arginine decarboxylase.